The following is a 338-amino-acid chain: Biotin synthase (338 aa).

A Radical SAM core domain is found at aspartate 45–arginine 272. Residues cysteine 60, cysteine 64, and cysteine 67 each contribute to the [4Fe-4S] cluster site. Cysteine 104, cysteine 135, cysteine 195, and arginine 267 together coordinate [2Fe-2S] cluster.

It belongs to the radical SAM superfamily. Biotin synthase family. Homodimer. The cofactor is [4Fe-4S] cluster. [2Fe-2S] cluster is required as a cofactor.

The enzyme catalyses (4R,5S)-dethiobiotin + (sulfur carrier)-SH + 2 reduced [2Fe-2S]-[ferredoxin] + 2 S-adenosyl-L-methionine = (sulfur carrier)-H + biotin + 2 5'-deoxyadenosine + 2 L-methionine + 2 oxidized [2Fe-2S]-[ferredoxin]. Its pathway is cofactor biosynthesis; biotin biosynthesis; biotin from 7,8-diaminononanoate: step 2/2. In terms of biological role, catalyzes the conversion of dethiobiotin (DTB) to biotin by the insertion of a sulfur atom into dethiobiotin via a radical-based mechanism. The protein is Biotin synthase of Parvibaculum lavamentivorans (strain DS-1 / DSM 13023 / NCIMB 13966).